A 263-amino-acid polypeptide reads, in one-letter code: Shikimate dehydrogenase (NADP(+)) (263 aa).

Residues 14–16 (SLS) and Thr60 contribute to the shikimate site. Lys64 functions as the Proton acceptor in the catalytic mechanism. Residues Asn85 and Asp100 each coordinate shikimate. NADP(+)-binding positions include 123 to 127 (GAGGA), 146 to 151 (NRTPQR), and Leu205. Tyr207 serves as a coordination point for shikimate. Position 228 (Gly228) interacts with NADP(+).

It belongs to the shikimate dehydrogenase family. Homodimer.

It catalyses the reaction shikimate + NADP(+) = 3-dehydroshikimate + NADPH + H(+). It functions in the pathway metabolic intermediate biosynthesis; chorismate biosynthesis; chorismate from D-erythrose 4-phosphate and phosphoenolpyruvate: step 4/7. In terms of biological role, involved in the biosynthesis of the chorismate, which leads to the biosynthesis of aromatic amino acids. Catalyzes the reversible NADPH linked reduction of 3-dehydroshikimate (DHSA) to yield shikimate (SA). The polypeptide is Shikimate dehydrogenase (NADP(+)) (Thermus thermophilus (strain ATCC BAA-163 / DSM 7039 / HB27)).